The sequence spans 516 residues: Melianol synthase CYP71BQ17 (516 aa).

A helical transmembrane segment spans residues 14-34 (MPHLPSLPVSLSFLLFFLMLV). Cys454 provides a ligand contact to heme.

This sequence belongs to the cytochrome P450 family. Requires heme as cofactor. As to expression, mainly expressed in roots and, to a lesser extent, in stems and old leaves.

The protein resides in the membrane. It carries out the reaction dihydroniloticin + 2 reduced [NADPH--hemoprotein reductase] + 2 O2 = melianol + 2 oxidized [NADPH--hemoprotein reductase] + 3 H2O + 2 H(+). It functions in the pathway secondary metabolite biosynthesis; terpenoid biosynthesis. In terms of biological role, monooxygenase involved in the biosynthesis of quassinoids triterpene natural products such as ailanthone, chaparrinone, glaucarubinone and amarolide, allelopathic degraded triterpene lactones inhibiting the growth of other plants, and possessing antimalarial, antifeedant, insecticidal, anti-inflammatory and anticancer activities. Catalyzes the conversion of dihydroniloticin to the protolimonoid melianol. This is Melianol synthase CYP71BQ17 from Ailanthus altissima (Tree-of-heaven).